We begin with the raw amino-acid sequence, 263 residues long: Exosome complex component Rrp4 (263 aa).

Residues 51–127 (GKYIPSRKDF…KAMKVELSMR (77 aa)) enclose the S1 motif domain. Residues 135 to 196 (SKGRIIEVVP…DRLTTAIEMI (62 aa)) form the KH domain. Residues 213–263 (LRGEPEGTEGSDEEQLVDEEVAGVSLEDDDVTEETSRKVDVLLDNDTDETN) form a disordered region. Over residues 218 to 245 (EGTEGSDEEQLVDEEVAGVSLEDDDVTE) the composition is skewed to acidic residues.

This sequence belongs to the RRP4 family. Component of the archaeal exosome complex. Forms a trimer of Rrp4 and/or Csl4 subunits. The trimer associates with a hexameric ring-like arrangement composed of 3 Rrp41-Rrp42 heterodimers.

Its subcellular location is the cytoplasm. Its function is as follows. Non-catalytic component of the exosome, which is a complex involved in RNA degradation. Increases the RNA binding and the efficiency of RNA degradation. Confers strong poly(A) specificity to the exosome. The protein is Exosome complex component Rrp4 of Methanococcoides burtonii (strain DSM 6242 / NBRC 107633 / OCM 468 / ACE-M).